The following is a 117-amino-acid chain: Small ribosomal subunit protein bS6 (117 aa).

Positions 96-117 (HAEGPSVQMQKRDERDNRRERR) are disordered. The segment covering 105–117 (QKRDERDNRRERR) has biased composition (basic and acidic residues).

This sequence belongs to the bacterial ribosomal protein bS6 family.

Functionally, binds together with bS18 to 16S ribosomal RNA. The polypeptide is Small ribosomal subunit protein bS6 (Ruegeria sp. (strain TM1040) (Silicibacter sp.)).